A 356-amino-acid chain; its full sequence is Tyrosine recombinase XerS (356 aa).

Residues Val16–Thr121 form the Core-binding (CB) domain. The 186-residue stretch at Gly169–Asp354 folds into the Tyr recombinase domain. Residues Arg210, Lys234, His306, Arg309, and His332 contribute to the active site. Tyr341 acts as the O-(3'-phospho-DNA)-tyrosine intermediate in catalysis.

Belongs to the 'phage' integrase family. XerS subfamily.

The protein localises to the cytoplasm. Its activity is regulated as follows. FtsK is required for recombination. Its function is as follows. Site-specific tyrosine recombinase, which acts by catalyzing the cutting and rejoining of the recombining DNA molecules. Essential to convert dimers of the bacterial chromosome into monomers to permit their segregation at cell division. Binds an atypical recombination dif site (difSL). Binds preferentially to the left arm and cooperatively to the right arm of difSL. The polypeptide is Tyrosine recombinase XerS (Lactococcus lactis subsp. cremoris (strain MG1363)).